We begin with the raw amino-acid sequence, 148 residues long: uncharacterized protein (148 aa).

The interval K55–P148 is disordered. The segment covering R68 to E104 has biased composition (polar residues).

This is an uncharacterized protein from Homo sapiens (Human).